The chain runs to 271 residues: Magnesium dechelatase SGR2, chloroplastic (271 aa).

Residues 1-54 (MCSLATNLLLPSKMKPVFPEKLSTSSLCVTTRRSKMKNRSIVPVARLFGPAIFE) constitute a chloroplast transit peptide.

Belongs to the staygreen family. As to quaternary structure, interacts with the light harvesting complex II (LHCII). Interacts with the chlorophyll catabolic enzyme (CCE) RCCR.

Its subcellular location is the plastid. The protein localises to the chloroplast thylakoid membrane. It catalyses the reaction chlorophyll a + 2 H(+) = pheophytin a + Mg(2+). Magnesium chelatase involved in chlorophyll a degradation in the chlorophyll-protein complexes of photosystem I (PSI) and photosystem II (PSII). Contributes to the degradation of PSI and PSII in the thylakoid membranes. Required to trigger chlorophyll degradation during natural and dark-induced leaf senescence. Mediates chlorophyll degradation during embryo degreening. Recombinant SGR2 possesses high dechelating activity against chlorophyll a, very low activity against chlorophyllide a, and no activity against chlorophyll b. This Arabidopsis thaliana (Mouse-ear cress) protein is Magnesium dechelatase SGR2, chloroplastic.